We begin with the raw amino-acid sequence, 261 residues long: Syntaxin-7 (261 aa).

N-acetylserine is present on S2. Residues 2-238 (SYTPGIGGDS…DYQRKSRKTL (237 aa)) lie on the Cytoplasmic side of the membrane. T4 is modified (phosphothreonine). Residue S45 is modified to Phosphoserine. Residues 47–68 (ELRQLLQQKQQYTNQLAKETDK) are a coiled coil. At S75 the chain carries Phosphoserine. T79 is modified (phosphothreonine). A phosphoserine mark is found at S125, S126, S129, and S205. Residues 128–148 (VSGGFPEDSSKEKNLVSWESQ) form a disordered region. Positions 165–227 (LRLIHERESS…QQANQQLSRA (63 aa)) constitute a t-SNARE coiled-coil homology domain. The helical; Anchor for type IV membrane protein transmembrane segment at 239–259 (CIIIFILVVRIVIICLIVWGL) threads the bilayer. Residues 260–261 (KG) lie on the Vesicular side of the membrane.

The protein belongs to the syntaxin family. As to quaternary structure, interacts with VPS11, VPS16 and VPS18. Interacts with VPS33A. Forms a SNARE complex with VTI1B, STX8 and VAMP8 which functions in the homotypic fusion of late endosomes. Component of the SNARE complex composed of STX7, STX8, VAMP7 and VTI1B that is required for heterotypic fusion of late endosomes with lysosomes. Interacts with TPC1.

The protein localises to the early endosome membrane. Functionally, may be involved in protein trafficking from the plasma membrane to the early endosome (EE) as well as in homotypic fusion of endocytic organelles. Mediates the endocytic trafficking from early endosomes to late endosomes and lysosomes. This chain is Syntaxin-7 (Stx7), found in Mus musculus (Mouse).